Reading from the N-terminus, the 636-residue chain is Chaperone protein HtpG (636 aa).

The a; substrate-binding stretch occupies residues 1-345; it reads MSESATANAN…SSDLPLNVSR (345 aa). Residues 346–562 are b; that stretch reads EILQQSKDID…EHDPSGNLAR (217 aa). The interval 563 to 636 is c; it reads LMKAAGQPMP…NDLMMALSAK (74 aa).

It belongs to the heat shock protein 90 family. As to quaternary structure, homodimer.

Its subcellular location is the cytoplasm. Functionally, molecular chaperone. Has ATPase activity. The sequence is that of Chaperone protein HtpG from Dechloromonas aromatica (strain RCB).